Here is a 59-residue protein sequence, read N- to C-terminus: Large ribosomal subunit protein bL32 (59 aa).

Positions 1-59 (MAVQQNKKSPSKRGMHRSHDALTAPALSVDSTTGEVHRPHHISPNGMYRGRKVVKAKGE) are disordered. Basic residues predominate over residues 49 to 59 (RGRKVVKAKGE).

It belongs to the bacterial ribosomal protein bL32 family.

The sequence is that of Large ribosomal subunit protein bL32 (rpmF) from Neisseria meningitidis serogroup B (strain ATCC BAA-335 / MC58).